The chain runs to 382 residues: GDSL esterase/lipase At4g01130 (382 aa).

The N-terminal stretch at M1–S28 is a signal peptide. The Nucleophile role is filled by S41. 4 N-linked (GlcNAc...) asparagine glycosylation sites follow: N118, N263, N275, and N330. Catalysis depends on residues D348 and H351.

It belongs to the 'GDSL' lipolytic enzyme family.

The protein localises to the secreted. The sequence is that of GDSL esterase/lipase At4g01130 from Arabidopsis thaliana (Mouse-ear cress).